The primary structure comprises 231 residues: 7-cyano-7-deazaguanine synthase (231 aa).

ATP is bound at residue 8 to 18 (FSGGQDSTTCL). Zn(2+) is bound by residues cysteine 188, cysteine 197, cysteine 200, and cysteine 203.

The protein belongs to the QueC family. Zn(2+) is required as a cofactor.

It catalyses the reaction 7-carboxy-7-deazaguanine + NH4(+) + ATP = 7-cyano-7-deazaguanine + ADP + phosphate + H2O + H(+). Its pathway is purine metabolism; 7-cyano-7-deazaguanine biosynthesis. Functionally, catalyzes the ATP-dependent conversion of 7-carboxy-7-deazaguanine (CDG) to 7-cyano-7-deazaguanine (preQ(0)). This chain is 7-cyano-7-deazaguanine synthase, found in Escherichia coli O127:H6 (strain E2348/69 / EPEC).